A 515-amino-acid polypeptide reads, in one-letter code: Cytidine and dCMP deaminase domain-containing protein 1 (515 aa).

2 stretches are compositionally biased toward polar residues: residues 1 to 11 (MKEAGQMQNLE) and 18 to 27 (SVSTQTGSMT). Disordered stretches follow at residues 1 to 27 (MKEA…GSMT) and 56 to 83 (RQKS…STDK). Basic and acidic residues predominate over residues 60 to 83 (QKNEEGKHGPLGDNEEMTRVSTDK). Residues 71–169 (GDNEEMTRVS…SLLTEASSSE (99 aa)) form the CMP/dCMP-type deaminase 1 domain. 3 residues coordinate Zn(2+): H110, C135, and C138. The Nuclear export signal signature appears at 272–284 (NLRQNMKDLILLL). The 166-residue stretch at 318–483 (EIARHCMVQA…LNPSEAYGLE (166 aa)) folds into the CMP/dCMP-type deaminase 2 domain. Position 399 (H399) interacts with Zn(2+). The active-site Proton donor is E401. 2 residues coordinate Zn(2+): C427 and C430. The tract at residues 481-515 (GLEQNEPERRENGVLRPVPQKEEQHQDKKLRLGIH) is disordered. The span at 486-515 (EPERRENGVLRPVPQKEEQHQDKKLRLGIH) shows a compositional bias: basic and acidic residues. The Bipartite nuclear localization signal signature appears at 489 to 511 (RRENGVLRPVPQKEEQHQDKKLR).

Belongs to the cytidine and deoxycytidylate deaminase family. Zn(2+) is required as a cofactor.

The protein localises to the cytoplasm. It is found in the nucleus. It carries out the reaction 2'-deoxycytidine + H2O + H(+) = 2'-deoxyuridine + NH4(+). The catalysed reaction is cytidine + H2O + H(+) = uridine + NH4(+). Functionally, catalyzes the deamination of cytidine and deoxycytidine into uridine and deoxyuridine, respectively. May play an important role in testicular development and spermatogenesis. The chain is Cytidine and dCMP deaminase domain-containing protein 1 (CDADC1) from Macaca fascicularis (Crab-eating macaque).